Consider the following 112-residue polypeptide: Small ribosomal subunit protein bS6c (112 aa).

This sequence belongs to the bacterial ribosomal protein bS6 family.

It localises to the plastid. Its subcellular location is the chloroplast. Binds together with bS18 to 16S ribosomal RNA. This chain is Small ribosomal subunit protein bS6c (rps6), found in Porphyra purpurea (Red seaweed).